A 262-amino-acid chain; its full sequence is Glutamate racemase (262 aa).

Substrate contacts are provided by residues 10-11 (DS) and 42-43 (FG). Cys-74 serves as the catalytic Proton donor/acceptor. 75 to 76 (NT) serves as a coordination point for substrate. Cys-189 functions as the Proton donor/acceptor in the catalytic mechanism. Substrate is bound at residue 190–191 (TH).

It belongs to the aspartate/glutamate racemases family.

The enzyme catalyses L-glutamate = D-glutamate. The protein operates within cell wall biogenesis; peptidoglycan biosynthesis. Provides the (R)-glutamate required for cell wall biosynthesis. The chain is Glutamate racemase from Mesorhizobium japonicum (strain LMG 29417 / CECT 9101 / MAFF 303099) (Mesorhizobium loti (strain MAFF 303099)).